The following is a 152-amino-acid chain: Ninjurin-1 (152 aa).

An N-acetylmethionine modification is found at Met-1. A compositionally biased stretch (acidic residues) spans 1 to 10 (MESGTEEYEL). The disordered stretch occupies residues 1–29 (MESGTEEYELNGDLRPGSPGSPDALPPRW). Residues 1 to 78 (MESGTEEYEL…EQGNDFAFFV (78 aa)) lie on the Extracellular side of the membrane. Phosphoserine occurs at positions 18 and 21. Residues 26–37 (PPRWGLRNRPIN) form an N-terminal adhesion motif region. A required to induce plasma membrane rupture region spans residues 40-69 (HYANKKSAAESMLDIALLMANASQLKAVVE). The interval 44–55 (KKSAAESMLDIA) is helix alpha1. The helix alpha2 stretch occupies residues 58–74 (MANASQLKAVVEQGNDF). N-linked (GlcNAc...) asparagine glycosylation is present at Asn-60. A helical membrane pass occupies residues 79-103 (PLVVLISISLVLQIGVGVLLIFLVK). At 104 to 113 (YDLNNPAKHA) the chain is on the cytoplasmic side. The helical transmembrane segment at 114–138 (KLDFLNNLATGLVFIIVVVNIFITA) threads the bilayer. Over 139–152 (FGVQKPVMDVAPRQ) the chain is Extracellular.

The protein belongs to the ninjurin family. Homodimer; in absence of death stimuli, forms an inactive homodimer. Homooligomer; in response to death stimuli, homooligomerizes into long, highly branched filaments and large, ring-shaped structures in the membrane. Post-translationally, cleaved by MMP9 protease to generate the Secreted ninjurin-1 form. In terms of processing, N-linked glycosylation is required for homooligomerization.

It is found in the cell membrane. It localises to the synaptic cell membrane. The protein localises to the secreted. Its activity is regulated as follows. In response to death stimuli, homooligomerizes and disrupts membrane integrity by introducing the hydrophilic faces of alpha1 and alpha2 helices into the hydrophobic membrane. Homooligomerization and ability to mediate plasma membrane rupture is inhibited by glycine; it is unclear whether glycine directly or indirectly inhibits homooligomerization. In normal conditions, NINJ1 is autoinhibited via formation of a homodimer: in the inactive homodimer, the alpha1 and alpha2 helices (residues 44-74) form a single transmembrane region without a kink, in which hydrophilic faces of alpha1 and alpha2 helices are sequestered. In terms of biological role, effector of various programmed cell death, such as pyroptosis and necroptosis, which mediates plasma membrane rupture (cytolysis). Oligomerizes in response to death stimuli and forms ring-like structures on the plasma membrane: acts by cutting and shedding membrane disks, like a cookie cutter, leading to membrane damage and loss that cannot be repaired by the cell. Plasma membrane rupture leads to release intracellular molecules named damage-associated molecular patterns (DAMPs) that propagate the inflammatory response. Mechanistically, mediates plasma membrane rupture by introducing hydrophilic faces of 2 alpha helices into the hydrophobic membrane. Induces plasma membrane rupture downstream of Gasdermin (GSDMA, GSDMB, GSDMC, GSDMD, or GSDME) or MLKL during pyroptosis or necroptosis, respectively. Acts as an effector of PANoptosis downstream of CASP1, CASP4, CASP8 and RIPK3. Also induces plasma membrane rupture in response to cell swelling caused by osmotic stress and ferroptosis downstream of lipid peroxidation. Acts as a regulator of Toll-like receptor 4 (TLR4) signaling triggered by lipopolysaccharide (LPS) during systemic inflammation; directly binds LPS. Involved in leukocyte migration during inflammation by promoting transendothelial migration of macrophages via homotypic binding. Promotes the migration of monocytes across the brain endothelium to central nervous system inflammatory lesions. Also acts as a homophilic transmembrane adhesion molecule involved in various processes such as axonal growth, cell chemotaxis and angiogenesis. Promotes cell adhesion by mediating homophilic interactions via its extracellular N-terminal adhesion motif (N-NAM). Involved in the progression of the inflammatory stress by promoting cell-to-cell interactions between immune cells and endothelial cells. Plays a role in nerve regeneration by promoting maturation of Schwann cells. Acts as a regulator of angiogenesis. Promotes the formation of new vessels by mediating the interaction between capillary pericyte cells and endothelial cells. Also mediates vascular functions in penile tissue as well as vascular formation. Promotes osteoclasts development by enhancing the survival of prefusion osteoclasts. Also involved in striated muscle growth and differentiation. Also involved in cell senescence in a p53/TP53 manner, possibly by acting as an indirect regulator of p53/TP53 mRNA translation. Its function is as follows. Secreted form generated by cleavage, which has chemotactic activity. Acts as an anti-inflammatory mediator by promoting monocyte recruitment, thereby ameliorating atherosclerosis. The polypeptide is Ninjurin-1 (Mus musculus (Mouse)).